The chain runs to 501 residues: Nucleic-acid-binding protein from transposon X-element (501 aa).

Disordered stretches follow at residues 20-71 (SSPQ…GNSN) and 105-128 (AAAK…SKPP). The CCHC-type zinc finger occupies 285 to 302 (VQCHRCQQIGHTAKYCRK). Disordered regions lie at residues 353–385 (RPRS…SRGG) and 400–443 (QPMS…TDAS). The span at 407 to 422 (QQQKQKQQPYDGSPSR) shows a compositional bias: low complexity. Over residues 434-443 (GTLQRSTDAS) the composition is skewed to polar residues.

It is found in the virion. In terms of biological role, strongly basic protein that binds directly to retroviral RNA and may be involved in its packaging and in the reverse transcription process. This is Nucleic-acid-binding protein from transposon X-element from Drosophila melanogaster (Fruit fly).